The primary structure comprises 354 residues: 4-hydroxy-2-oxovalerate aldolase 6 (354 aa).

A Pyruvate carboxyltransferase domain is found at 10 to 262 (VRIVDTTLRD…ATGLDVMATL (253 aa)). Residue 18–19 (RD) participates in substrate binding. Residue Asp19 participates in Mn(2+) binding. His22 serves as the catalytic Proton acceptor. The substrate site is built by Ser172 and His201. 2 residues coordinate Mn(2+): His201 and His203. Tyr292 contributes to the substrate binding site.

Belongs to the 4-hydroxy-2-oxovalerate aldolase family.

The catalysed reaction is (S)-4-hydroxy-2-oxopentanoate = acetaldehyde + pyruvate. The protein is 4-hydroxy-2-oxovalerate aldolase 6 of Rhodococcus jostii (strain RHA1).